Consider the following 465-residue polypeptide: Lactaldehyde dehydrogenase (465 aa).

220-225 (GSVEVG) lines the NAD(+) pocket. Active-site residues include glutamate 240 and cysteine 274.

It belongs to the aldehyde dehydrogenase family. Homotetramer.

It catalyses the reaction (S)-lactaldehyde + NAD(+) + H2O = (S)-lactate + NADH + 2 H(+). It functions in the pathway cofactor biosynthesis; coenzyme F420 biosynthesis. Its function is as follows. Involved in F420 biosynthesis through the oxidation of lactaldehyde to lactate. The sequence is that of Lactaldehyde dehydrogenase from Methanococcus vannielii (strain ATCC 35089 / DSM 1224 / JCM 13029 / OCM 148 / SB).